Consider the following 164-residue polypeptide: Small ribosomal subunit protein uS5 (164 aa).

One can recognise an S5 DRBM domain in the interval 10–73 (IEERVVAINR…ESAKKNMIEV (64 aa)).

Belongs to the universal ribosomal protein uS5 family. As to quaternary structure, part of the 30S ribosomal subunit. Contacts proteins S4 and S8.

Its function is as follows. With S4 and S12 plays an important role in translational accuracy. Functionally, located at the back of the 30S subunit body where it stabilizes the conformation of the head with respect to the body. The sequence is that of Small ribosomal subunit protein uS5 from Streptococcus suis (strain 98HAH33).